A 384-amino-acid polypeptide reads, in one-letter code: Urea transporter 1 (384 aa).

A disordered region spans residues Met1–Arg23. The next 5 membrane-spanning stretches (helical) occupy residues Ile61–Leu81, Pro85–Leu105, Ala111–Tyr131, Phe138–Ala158, and Leu168–His188. An N-linked (GlcNAc...) asparagine glycan is attached at Asn206. 3 helical membrane passes run Gly237 to Ile257, Gly279 to Leu299, and Val327 to Leu347.

The protein belongs to the urea transporter family. As to quaternary structure, homotrimer; each subunit contains a pore through which urea permeates. Identified in a complex with STOM.

The protein localises to the cell membrane. It is found in the basolateral cell membrane. It carries out the reaction urea(in) = urea(out). Its function is as follows. Mediates the transport of urea driven by a concentration gradient across the cell membranes of erythrocytes and the renal inner medullary collecting duct which is critical to the urinary concentrating mechanism. Facilitates water transport in erythrocytes. In Capra hircus (Goat), this protein is Urea transporter 1 (SLC14A1).